Consider the following 339-residue polypeptide: MEFDYLHLYVDDYQSAHRCYQRQWGFTCVNKIITDQGITGIYQQGQILLLISASESSLSRYADYLQKHPPGVGEVAWQVANWQKIQHQLSELQIETTPVIHPLTKAEGLTFLLWGDVHHSIYPVRSELNQNKTLHGVGLTTIDHVVLNIAADQFTQASQWYQQVFGWSVQQSFTVNTPHSGLYSEALASANGKVQFNLNCPTNNSSQIQTFLANNHGAGIQHVAFSTTSITRTVAHLRERGVNFLKIPTGYYQQQRNSSYFNYASLDWDTLQCLEILLDDQDNTGERLLLQIFSQPCYGVGTLFWEIIERRHRAKGFGQGNFQALYEAVETLEKQLEVP.

2 consecutive VOC domains span residues 2–127 (EFDY…VRSE) and 141–276 (TIDH…CLEI). Fe cation contacts are provided by H144, H222, and E306.

The protein belongs to the 4HPPD family. It depends on Fe cation as a cofactor.

This is an uncharacterized protein from Synechocystis sp. (strain ATCC 27184 / PCC 6803 / Kazusa).